We begin with the raw amino-acid sequence, 171 residues long: Phosphinothricin N-acetyltransferase (171 aa).

An N-acetyltransferase domain is found at 7–171; it reads VQVRPGVEED…WDVAWYERPL (165 aa). Residues 94–96, 102–107, and Asn-133 each bind acetyl-CoA; these read VYV and GRGIGS.

This sequence belongs to the acetyltransferase family. PAT/BAR subfamily.

It catalyses the reaction phosphinothricin + acetyl-CoA = N-acetylphosphinothricin + CoA + H(+). Functionally, inactivates phosphinothricin (PPT) by transfer of an acetyl group from acetyl CoA. The physiological substrate could be a structurally related compound. The sequence is that of Phosphinothricin N-acetyltransferase from Streptomyces coelicolor (strain ATCC BAA-471 / A3(2) / M145).